The following is a 391-amino-acid chain: Lipid-A-disaccharide synthase (391 aa).

This sequence belongs to the LpxB family.

The catalysed reaction is a lipid X + a UDP-2-N,3-O-bis[(3R)-3-hydroxyacyl]-alpha-D-glucosamine = a lipid A disaccharide + UDP + H(+). Its pathway is bacterial outer membrane biogenesis; LPS lipid A biosynthesis. Condensation of UDP-2,3-diacylglucosamine and 2,3-diacylglucosamine-1-phosphate to form lipid A disaccharide, a precursor of lipid A, a phosphorylated glycolipid that anchors the lipopolysaccharide to the outer membrane of the cell. This Aromatoleum aromaticum (strain DSM 19018 / LMG 30748 / EbN1) (Azoarcus sp. (strain EbN1)) protein is Lipid-A-disaccharide synthase.